Here is a 188-residue protein sequence, read N- to C-terminus: Mitochondrial import inner membrane translocase subunit Tim23B (188 aa).

A run of 2 helical transmembrane segments spans residues 73–93 and 125–145; these read FELA…FGAM and ALWA…GVII.

It belongs to the Tim17/Tim22/Tim23 family.

It is found in the mitochondrion inner membrane. Its function is as follows. May participate in the translocation of transit peptide-containing proteins across the mitochondrial inner membrane. the PAM complex. The protein is Mitochondrial import inner membrane translocase subunit Tim23B of Homo sapiens (Human).